Here is a 1279-residue protein sequence, read N- to C-terminus: Sterol regulatory element-binding protein cleavage-activating protein (1279 aa).

Topologically, residues 1 to 18 (MTLTERLREKISRAFYNH) are cytoplasmic. A helical transmembrane segment spans residues 19–39 (GLLCASYPIPIILFTGFCILA). At 40-279 (CCYPLLKLPL…SLVHVHFKEE (240 aa)) the chain is on the lumenal side. Residues 46 to 284 (KLPLPGTGPV…HFKEEIGVAE (239 aa)) are loop-1. Residues 60-80 (PVKDYSPPPVDSDRKQGEPTE) form a disordered region. Residue Asn-263 is glycosylated (N-linked (GlcNAc...) asparagine). Residues 280-300 (IGVAELIPLVTTYIILFAYIY) form a helical membrane-spanning segment. Residues 284 to 442 (ELIPLVTTYI…MLFFTTVLSI (159 aa)) enclose the SSD domain. At 301-312 (FSTRKIDMVKSK) the chain is on the cytoplasmic side. Residues 313-333 (WGLALAAVVTVLSSLLMSVGL) traverse the membrane as a helical segment. Residues 334–344 (CTLFGLTPTLN) lie on the Lumenal side of the membrane. A helical transmembrane segment spans residues 345-365 (GGEIFPYLVVVIGLENVLVLT). At 366–401 (KSVVSTPVDLEVKLRIAQGLSSESWSIMKNMATELG) the chain is on the cytoplasmic side. The chain crosses the membrane as a helical span at residues 402 to 422 (IILIGYFTLVPAIQEFCLFAV). Position 423 (Val-423) is a topological domain, lumenal. The helical transmembrane segment at 424 to 444 (GLVSDFFLQMLFFTTVLSIDI) threads the bilayer. The Cytoplasmic segment spans residues 445–518 (RRMELADLNK…FLARTRLAQR (74 aa)). An ER export signal motif is present at residues 447 to 452 (MELADL). Glycyl lysine isopeptide (Lys-Gly) (interchain with G-Cter in ubiquitin) cross-links involve residues Lys-454 and Lys-466. The chain crosses the membrane as a helical span at residues 519–539 (LIMAGTVVWIGILVYTDPAGL). The tract at residues 535–710 (DPAGLRNYLA…QAHGDVTLYK (176 aa)) is loop-7. Over 540-709 (RNYLAAQVTE…VQAHGDVTLY (170 aa)) the chain is Lumenal. Positions 579-615 (IFPPDAPKLPENQTSPGESPERGGPAEVVHDSPVPEV) are disordered. Asn-590 and Asn-641 each carry an N-linked (GlcNAc...) asparagine glycan. The disordered stretch occupies residues 668–696 (EGRHPQDGRSAWPPPGPIPAGHWEAGPKG). A helical transmembrane segment spans residues 710-730 (KVAALGLATGIVLVLLLLCLY). The Cytoplasmic segment spans residues 731–1279 (RVLCPRNYGQ…YVPSVLEKLD (549 aa)). Residues 731–1279 (RVLCPRNYGQ…YVPSVLEKLD (549 aa)) form an interaction with SREBF2 region. The stretch at 771–811 (VLRGHLMDIECLASDGMLLVSCCLAGHVCVWDAQTGDCLTR) is one WD 1 repeat. Residues 811 to 904 (RIPRPGRQRR…PRHRAVCGRS (94 aa)) are disordered. A phosphoserine mark is found at Ser-822, Ser-838, and Ser-851. Over residues 877–891 (IDTNFSAQPRSSQPT) the composition is skewed to polar residues. Ser-907 and Ser-937 each carry phosphoserine. Positions 931-962 (PALRPPSPGPVLSQAPEDEGGSPEKGSPSLAW) are disordered. WD repeat units lie at residues 952-1002 (SPEK…LCCS) and 1005-1042 (EVSS…ALSP). Residue Arg-1051 is modified to Omega-N-methylarginine. WD repeat units follow at residues 1077 to 1114 (AHQK…CLFT), 1117 to 1155 (GHSG…RVSH), 1158 to 1195 (AHRG…KFYS), and 1197 to 1235 (QQDL…LLQT).

This sequence belongs to the WD repeat SCAP family. As to quaternary structure, membrane region forms a homotetramer. Component of the SCAP-SREBP complex (composed of SCAP and SREBF1/SREBP1 or SREBF2/SREBP2); interacts with SREBF1/SREBP1 or SREBF2/SREBP2 through its C-terminal cytoplasmic domain. Forms a ternary complex with INSIG1 or INSIG2 through its transmembrane domains at high sterol concentrations. Interacts with PAQR3; the interaction anchors the SCAP-SREBP complex to the Golgi apparatus in low cholesterol conditions. Interacts with the SEC23-SEC24 complex in a SAR1-GTP-dependent manner through an ER export signal in its third cytoplasmic loop. Interacts with RNF139; the interaction inhibits the interaction of SCAP with SEC24B and hampering the ER to Golgi transport of the SCAP-SREBP complex. Interacts with SPRING1. Ubiquitinated at Lys-454 and Lys-466. RNF145 triggers ubiquitination of SCAP, likely inhibiting SCAP-SREBP complex transport to the Golgi apparatus and the subsequent processing/maturation of SREBF2/SREBP2.

It is found in the endoplasmic reticulum membrane. The protein resides in the golgi apparatus membrane. Its subcellular location is the cytoplasmic vesicle. The protein localises to the COPII-coated vesicle membrane. Escort protein required for cholesterol as well as lipid homeostasis. Regulates export of the SCAP-SREBP complex from the endoplasmic reticulum to the Golgi upon low cholesterol, thereby regulating the processing of sterol regulatory element-binding proteins (SREBPs) SREBF1/SREBP1 and SREBF2/SREBP2. At high sterol concentrations, formation of a ternary complex with INSIG (INSIG1 or INSIG2) leads to mask the ER export signal in SCAP, promoting retention of the complex in the endoplasmic reticulum. Low sterol concentrations trigger release of INSIG, a conformational change in the SSD domain of SCAP, unmasking of the ER export signal, promoting recruitment into COPII-coated vesicles and transport of the SCAP-SREBP to the Golgi: in the Golgi, SREBPs are then processed, releasing the transcription factor fragment of SREBPs from the membrane, its import into the nucleus and up-regulation of LDLR, INSIG1 and the mevalonate pathway. Binds cholesterol via its SSD domain. This is Sterol regulatory element-binding protein cleavage-activating protein from Homo sapiens (Human).